Reading from the N-terminus, the 616-residue chain is Dihydroxy-acid dehydratase (616 aa).

Asp-81 contacts Mg(2+). Cys-122 lines the [2Fe-2S] cluster pocket. Residues Asp-123 and Lys-124 each coordinate Mg(2+). Lys-124 bears the N6-carboxylysine mark. Residue Cys-195 participates in [2Fe-2S] cluster binding. Glu-491 serves as a coordination point for Mg(2+). Ser-517 (proton acceptor) is an active-site residue.

Belongs to the IlvD/Edd family. Homodimer. The cofactor is [2Fe-2S] cluster. Mg(2+) is required as a cofactor.

It carries out the reaction (2R)-2,3-dihydroxy-3-methylbutanoate = 3-methyl-2-oxobutanoate + H2O. The catalysed reaction is (2R,3R)-2,3-dihydroxy-3-methylpentanoate = (S)-3-methyl-2-oxopentanoate + H2O. Its pathway is amino-acid biosynthesis; L-isoleucine biosynthesis; L-isoleucine from 2-oxobutanoate: step 3/4. It participates in amino-acid biosynthesis; L-valine biosynthesis; L-valine from pyruvate: step 3/4. Its function is as follows. Functions in the biosynthesis of branched-chain amino acids. Catalyzes the dehydration of (2R,3R)-2,3-dihydroxy-3-methylpentanoate (2,3-dihydroxy-3-methylvalerate) into 2-oxo-3-methylpentanoate (2-oxo-3-methylvalerate) and of (2R)-2,3-dihydroxy-3-methylbutanoate (2,3-dihydroxyisovalerate) into 2-oxo-3-methylbutanoate (2-oxoisovalerate), the penultimate precursor to L-isoleucine and L-valine, respectively. The chain is Dihydroxy-acid dehydratase from Klebsiella pneumoniae (strain 342).